The sequence spans 134 residues: UPF0412 protein YaaI (134 aa).

The signal sequence occupies residues 1–23 (MKSVITISASLAISLMLCCTAQA).

The protein belongs to the UPF0412 family.

In Escherichia coli O127:H6 (strain E2348/69 / EPEC), this protein is UPF0412 protein YaaI.